A 207-amino-acid polypeptide reads, in one-letter code: Ribonuclease HII (207 aa).

Positions 12–201 constitute an RNase H type-2 domain; the sequence is DLVAGVDEVG…VRAAWEAREG (190 aa). A divalent metal cation contacts are provided by aspartate 18, glutamate 19, and aspartate 110.

This sequence belongs to the RNase HII family. The cofactor is Mn(2+). Requires Mg(2+) as cofactor.

It localises to the cytoplasm. It carries out the reaction Endonucleolytic cleavage to 5'-phosphomonoester.. Functionally, endonuclease that specifically degrades the RNA of RNA-DNA hybrids. The polypeptide is Ribonuclease HII (Pseudomonas putida (strain W619)).